Here is a 511-residue protein sequence, read N- to C-terminus: 2,3-bisphosphoglycerate-independent phosphoglycerate mutase (511 aa).

Mn(2+) is bound at residue Asp12. Tyr36 carries the phosphotyrosine modification. Ser62 contacts Mn(2+). Ser62 serves as the catalytic Phosphoserine intermediate. Substrate is bound by residues His123, 153 to 154 (RD), Arg185, Arg191, 261 to 264 (RPDR), and Lys336. Mn(2+) contacts are provided by Asp403, His407, Asp444, His445, and His462.

The protein belongs to the BPG-independent phosphoglycerate mutase family. In terms of assembly, monomer. Mn(2+) is required as a cofactor.

It catalyses the reaction (2R)-2-phosphoglycerate = (2R)-3-phosphoglycerate. It participates in carbohydrate degradation; glycolysis; pyruvate from D-glyceraldehyde 3-phosphate: step 3/5. Functionally, catalyzes the interconversion of 2-phosphoglycerate and 3-phosphoglycerate. The sequence is that of 2,3-bisphosphoglycerate-independent phosphoglycerate mutase from Geobacillus kaustophilus (strain HTA426).